Here is a 62-residue protein sequence, read N- to C-terminus: Photosystem II reaction center protein Z (62 aa).

Helical transmembrane passes span 8–28 and 41–61; these read FLIA…VAYA and YVGS…NFLV.

It belongs to the PsbZ family. PSII is composed of 1 copy each of membrane proteins PsbA, PsbB, PsbC, PsbD, PsbE, PsbF, PsbH, PsbI, PsbJ, PsbK, PsbL, PsbM, PsbT, PsbX, PsbY, PsbZ, Psb30/Ycf12, peripheral proteins PsbO, CyanoQ (PsbQ), PsbU, PsbV and a large number of cofactors. It forms dimeric complexes.

The protein localises to the cellular thylakoid membrane. May control the interaction of photosystem II (PSII) cores with the light-harvesting antenna, regulates electron flow through the 2 photosystem reaction centers. PSII is a light-driven water plastoquinone oxidoreductase, using light energy to abstract electrons from H(2)O, generating a proton gradient subsequently used for ATP formation. This chain is Photosystem II reaction center protein Z, found in Microcystis aeruginosa (strain NIES-843 / IAM M-2473).